The primary structure comprises 510 residues: Xylose import ATP-binding protein XylG (510 aa).

ABC transporter domains follow at residues 5–242 (LEMK…VGRE) and 259–505 (LRVE…LRSE). Residue 37–44 (GENGSGKS) coordinates ATP.

Belongs to the ABC transporter superfamily. Xylose importer (TC 3.A.1.2.4) family. In terms of assembly, the complex is composed of two ATP-binding proteins (XylG), two transmembrane proteins (XylH) and a solute-binding protein (XylF).

The protein localises to the cell inner membrane. The catalysed reaction is D-xylose(out) + ATP + H2O = D-xylose(in) + ADP + phosphate + H(+). Part of the ABC transporter complex XylFGH involved in xylose import. Responsible for energy coupling to the transport system. This Yersinia pestis protein is Xylose import ATP-binding protein XylG.